The following is a 459-amino-acid chain: Siroheme synthase 2 (459 aa).

Residues 1–204 are precorrin-2 dehydrogenase /sirohydrochlorin ferrochelatase; the sequence is MDYLPIFCQL…EDRERVQQLT (204 aa). Residues 22–23 and 43–44 contribute to the NAD(+) site; these read EI and LD. S128 is subject to Phosphoserine. The tract at residues 216-459 is uroporphyrinogen-III C-methyltransferase; that stretch reads GEVTLVGAGP…KLSWFSDQTA (244 aa). Residue P225 coordinates S-adenosyl-L-methionine. D248 serves as the catalytic Proton acceptor. Catalysis depends on K270, which acts as the Proton donor. S-adenosyl-L-methionine is bound by residues 301–303, I306, 331–332, M382, and G411; these read GGD and TA.

In the N-terminal section; belongs to the precorrin-2 dehydrogenase / sirohydrochlorin ferrochelatase family. The protein in the C-terminal section; belongs to the precorrin methyltransferase family.

It catalyses the reaction uroporphyrinogen III + 2 S-adenosyl-L-methionine = precorrin-2 + 2 S-adenosyl-L-homocysteine + H(+). It carries out the reaction precorrin-2 + NAD(+) = sirohydrochlorin + NADH + 2 H(+). The catalysed reaction is siroheme + 2 H(+) = sirohydrochlorin + Fe(2+). Its pathway is cofactor biosynthesis; adenosylcobalamin biosynthesis; precorrin-2 from uroporphyrinogen III: step 1/1. The protein operates within cofactor biosynthesis; adenosylcobalamin biosynthesis; sirohydrochlorin from precorrin-2: step 1/1. It participates in porphyrin-containing compound metabolism; siroheme biosynthesis; precorrin-2 from uroporphyrinogen III: step 1/1. It functions in the pathway porphyrin-containing compound metabolism; siroheme biosynthesis; siroheme from sirohydrochlorin: step 1/1. Its pathway is porphyrin-containing compound metabolism; siroheme biosynthesis; sirohydrochlorin from precorrin-2: step 1/1. Multifunctional enzyme that catalyzes the SAM-dependent methylations of uroporphyrinogen III at position C-2 and C-7 to form precorrin-2 via precorrin-1. Then it catalyzes the NAD-dependent ring dehydrogenation of precorrin-2 to yield sirohydrochlorin. Finally, it catalyzes the ferrochelation of sirohydrochlorin to yield siroheme. The sequence is that of Siroheme synthase 2 from Pectobacterium atrosepticum (strain SCRI 1043 / ATCC BAA-672) (Erwinia carotovora subsp. atroseptica).